The sequence spans 255 residues: Type III pantothenate kinase (255 aa).

Position 6 to 13 (6 to 13) interacts with ATP; the sequence is DIGNTTSE. Residues Y100 and 107–110 contribute to the substrate site; that span reads GIDR. D109 serves as the catalytic Proton acceptor. D129 serves as a coordination point for K(+). An ATP-binding site is contributed by T132. Residue T184 coordinates substrate.

It belongs to the type III pantothenate kinase family. As to quaternary structure, homodimer. NH4(+) is required as a cofactor. Requires K(+) as cofactor.

The protein localises to the cytoplasm. It carries out the reaction (R)-pantothenate + ATP = (R)-4'-phosphopantothenate + ADP + H(+). It functions in the pathway cofactor biosynthesis; coenzyme A biosynthesis; CoA from (R)-pantothenate: step 1/5. In terms of biological role, catalyzes the phosphorylation of pantothenate (Pan), the first step in CoA biosynthesis. This Persephonella marina (strain DSM 14350 / EX-H1) protein is Type III pantothenate kinase.